Here is a 328-residue protein sequence, read N- to C-terminus: N-acetyl-gamma-glutamyl-phosphate reductase (328 aa).

Residue Cys143 is part of the active site.

It belongs to the NAGSA dehydrogenase family. Type 1 subfamily.

It localises to the cytoplasm. It carries out the reaction N-acetyl-L-glutamate 5-semialdehyde + phosphate + NADP(+) = N-acetyl-L-glutamyl 5-phosphate + NADPH + H(+). Its pathway is amino-acid biosynthesis; L-arginine biosynthesis; N(2)-acetyl-L-ornithine from L-glutamate: step 3/4. Catalyzes the NADPH-dependent reduction of N-acetyl-5-glutamyl phosphate to yield N-acetyl-L-glutamate 5-semialdehyde. The polypeptide is N-acetyl-gamma-glutamyl-phosphate reductase (Methanoregula boonei (strain DSM 21154 / JCM 14090 / 6A8)).